A 437-amino-acid polypeptide reads, in one-letter code: Nicotinate phosphoribosyltransferase (437 aa).

Position 231 is a phosphohistidine; by autocatalysis (H231).

This sequence belongs to the NAPRTase family. Post-translationally, transiently phosphorylated on a His residue during the reaction cycle. Phosphorylation strongly increases the affinity for substrates and increases the rate of nicotinate D-ribonucleotide production. Dephosphorylation regenerates the low-affinity form of the enzyme, leading to product release.

The catalysed reaction is nicotinate + 5-phospho-alpha-D-ribose 1-diphosphate + ATP + H2O = nicotinate beta-D-ribonucleotide + ADP + phosphate + diphosphate. It functions in the pathway cofactor biosynthesis; NAD(+) biosynthesis; nicotinate D-ribonucleotide from nicotinate: step 1/1. Catalyzes the synthesis of beta-nicotinate D-ribonucleotide from nicotinate and 5-phospho-D-ribose 1-phosphate at the expense of ATP. The polypeptide is Nicotinate phosphoribosyltransferase (Vibrio vulnificus (strain CMCP6)).